Here is a 409-residue protein sequence, read N- to C-terminus: Elongation factor Tu, chloroplastic (409 aa).

In terms of domain architecture, tr-type G spans 10–214 (KPHVNIGTIG…AVDTYIPTPE (205 aa)). Positions 19–26 (GHVDHGKT) are G1. 19–26 (GHVDHGKT) contributes to the GTP binding site. Threonine 26 is a Mg(2+) binding site. A G2 region spans residues 60 to 64 (GITIN). Residues 81–84 (DCPG) form a G3 region. Residues 81–85 (DCPGH) and 136–139 (NKED) each bind GTP. The segment at 136–139 (NKED) is G4. Residues 174–176 (SAL) are G5.

Belongs to the TRAFAC class translation factor GTPase superfamily. Classic translation factor GTPase family. EF-Tu/EF-1A subfamily.

The protein resides in the plastid. The protein localises to the chloroplast. It carries out the reaction GTP + H2O = GDP + phosphate + H(+). Its function is as follows. GTP hydrolase that promotes the GTP-dependent binding of aminoacyl-tRNA to the A-site of ribosomes during protein biosynthesis. The polypeptide is Elongation factor Tu, chloroplastic (tufA) (Porphyra purpurea (Red seaweed)).